Reading from the N-terminus, the 795-residue chain is Phenylalanine--tRNA ligase beta subunit (795 aa).

Positions 39-148 (AGSFNGVVVG…ADAPLGTDIR (110 aa)) constitute a tRNA-binding domain. Residues 401–476 (PKRATITLRR…RVYGYNNIPD (76 aa)) enclose the B5 domain. Mg(2+) is bound by residues aspartate 454, aspartate 460, glutamate 463, and glutamate 464. The region spanning 701 to 794 (SRFPANRRDI…LKERFQASLR (94 aa)) is the FDX-ACB domain.

This sequence belongs to the phenylalanyl-tRNA synthetase beta subunit family. Type 1 subfamily. Tetramer of two alpha and two beta subunits. Mg(2+) serves as cofactor.

It is found in the cytoplasm. It catalyses the reaction tRNA(Phe) + L-phenylalanine + ATP = L-phenylalanyl-tRNA(Phe) + AMP + diphosphate + H(+). This is Phenylalanine--tRNA ligase beta subunit from Salmonella paratyphi A (strain ATCC 9150 / SARB42).